The sequence spans 61 residues: Small ribosomal subunit protein uS14 (61 aa).

Positions 24, 27, 40, and 43 each coordinate Zn(2+).

Belongs to the universal ribosomal protein uS14 family. Zinc-binding uS14 subfamily. Part of the 30S ribosomal subunit. Contacts proteins S3 and S10. Zn(2+) is required as a cofactor.

Its function is as follows. Binds 16S rRNA, required for the assembly of 30S particles and may also be responsible for determining the conformation of the 16S rRNA at the A site. This Mesoplasma florum (strain ATCC 33453 / NBRC 100688 / NCTC 11704 / L1) (Acholeplasma florum) protein is Small ribosomal subunit protein uS14.